We begin with the raw amino-acid sequence, 237 residues long: MDAYSSFPAEFEAVRPIYNVLVATAGMMWLINYIVTVRQIFRDRVRAIPLVSLCCNIAWEFTVVLVYRRPYLLFEIFCAMWLLVNMVIVYGSVKVSMEKQRSSSLVHKHLPLIVPLAILGCISGYYALAKTIGTPKTIHGGGTFASFVMTVDCLCQLLQRGSTHGASWTMWLTRVLGSYAAIVGEFLKAGFWPQQWGWYDNALMRWCTGMAVTMDILYACIFWYMGQAEEAAKGRKA.

7 helical membrane passes run 17–37 (IYNV…IVTV), 47–67 (AIPL…VLVY), 71–91 (YLLF…IVYG), 109–129 (HLPL…YALA), 138–158 (IHGG…CQLL), 167–187 (SWTM…GEFL), and 206–226 (WCTG…WYMG).

It belongs to the paxB family.

It is found in the membrane. It catalyses the reaction (S)-(2E,6E,10E)-epoxygeranylgeranyl-triacetate lactone = sartorypyrone F. The enzyme catalyses (S)-(2E,6E,10E)-epoxygeranylgeranyl-triacetate lactone = sartorypyrone D. It functions in the pathway secondary metabolite biosynthesis; terpenoid biosynthesis. In terms of biological role, terpene cyclase; part of the gene cluster that mediates the biosynthesis of meroterpenoids called sartorypyrones. Within the pathway, spyD catalyzes the cyclization of epoxygeranylgeranyl-triacetate lactone. SpyD exhibits promiscuous activity, resulting in the formation of bicyclic sartorypyrone F and monocyclic sartorypyrone D. The biosynthesis of sartorypyrones begins with the production of triacetic acid lactone (TAL) by the NR-PKS spyA using one molecule of acetyl-CoA and two molecules of malonyl-CoA. The prenyltransferase spyF then conjugates geranylgeranyl pyrophosphate (GGPP) to TAL to form geranylgeranyl-triacetate lactone, for which the pathway-specific geranylgeranyl pyrophosphate synthase (GGPS) spyE is required to provide GGPP. Subsequently, geranylgeranyl-triacetate lactone is epoxidized at the terminal olein by the FAD-dependent monooxygenase spyC, followed by cyclization of the terpenoid component catalyzed by the terpene cyclase spyD to produce both the bicyclic sartorypyrone F and the monocyclic sartorypyrone D. Finally, the last step of the biosynthesis involves the acetylation of the meroterpenoids sartorypyrones D and F by the acetyltransferase SpyB to produce sartorypyrones A and G, respectively. The polypeptide is Terpene cyclase spyD (Aspergillus fumigatus (strain ATCC MYA-4609 / CBS 101355 / FGSC A1100 / Af293) (Neosartorya fumigata)).